A 935-amino-acid chain; its full sequence is Transcriptional regulatory protein LevR (935 aa).

Positions 117–348 constitute a Sigma-54 factor interaction domain; that stretch reads AKGSLKKAIS…LKSNVQLVCA (232 aa). ATP is bound by residues 145 to 152 and 215 to 224; these read GPTGSGKS and ANGGILFMDE. The region spanning 468-573 is the PRD 1 domain; that stretch reads FVEDDVIQMT…HSIKSLKENK (106 aa). A Phosphohistidine modification is found at H503. One can recognise a PTS EIIA type-4 domain in the interval 574-711; sequence RVGIIVAAHG…PAASGKKKAL (138 aa). H582 bears the Phosphohistidine; by HPr mark. One can recognise a PRD 2 domain in the interval 831 to 935; sequence LNPHHVIDML…FAEEVHGQLF (105 aa). A Phosphohistidine modification is found at H866.

The protein belongs to the transcriptional antiterminator BglG family. Possibly phosphorylated and inactivated by the PTS system.

Functionally, involved in positive regulation of the levanase operon which comprises the levDEFG genes for a fructose PTS system, and sacA for levanase. This Bacillus subtilis (strain 168) protein is Transcriptional regulatory protein LevR (levR).